The following is a 340-amino-acid chain: Latency-related protein 1 (340 aa).

Disordered regions lie at residues 13–96 and 254–340; these read AALW…PNRQ and RLPG…PPRP. Repeat copies occupy residues 27–43 and 59–75. Positions 27-75 are 2 X 17 AA repeats; the sequence is PTPTHPHSHAPPLPRTPTPSHPHSRAPPLPRAPTPTHPHSHAPPLPRTP. A compositionally biased stretch (pro residues) spans 35–73; that stretch reads HAPPLPRTPTPSHPHSRAPPLPRAPTPTHPHSHAPPLPR. Residues 287-307 are compositionally biased toward gly residues; the sequence is ARGGGSGGGRGPGGGRGGPRG. The span at 308–326 shows a compositional bias: basic residues; sequence SRGRGGRGRGGRGGGRRGR.

In Human herpesvirus 1 (strain F) (HHV-1), this protein is Latency-related protein 1.